The following is a 165-amino-acid chain: Methylated-DNA--protein-cysteine methyltransferase (165 aa).

The active-site Nucleophile; methyl group acceptor is the C126.

The protein belongs to the MGMT family.

It localises to the cytoplasm. The enzyme catalyses a 6-O-methyl-2'-deoxyguanosine in DNA + L-cysteinyl-[protein] = S-methyl-L-cysteinyl-[protein] + a 2'-deoxyguanosine in DNA. It catalyses the reaction a 4-O-methyl-thymidine in DNA + L-cysteinyl-[protein] = a thymidine in DNA + S-methyl-L-cysteinyl-[protein]. Functionally, involved in the cellular defense against the biological effects of O6-methylguanine (O6-MeG) and O4-methylthymine (O4-MeT) in DNA. Repairs the methylated nucleobase in DNA by stoichiometrically transferring the methyl group to a cysteine residue in the enzyme. This is a suicide reaction: the enzyme is irreversibly inactivated. The polypeptide is Methylated-DNA--protein-cysteine methyltransferase (Mycobacterium leprae (strain TN)).